We begin with the raw amino-acid sequence, 243 residues long: Venom nerve growth factor 5 (243 aa).

The N-terminal stretch at 1-18 (MSMLCYTLIIAFLIGIWA) is a signal peptide. The propeptide occupies 19 to 125 (APKSEDNVPL…TLNRNIRTKR (107 aa)). The segment covering 47 to 66 (GLKTSRNTDQRHPAPKKAED) has biased composition (basic and acidic residues). Residues 47–67 (GLKTSRNTDQRHPAPKKAEDQ) are disordered. 3 disulfides stabilise this stretch: C139-C204, C182-C232, and C192-C234. N148 is a glycosylation site (N-linked (GlcNAc...) asparagine).

It belongs to the NGF-beta family. Homodimer; non-covalently linked. In terms of tissue distribution, expressed by the venom gland.

Its subcellular location is the secreted. Nerve growth factor is important for the development and maintenance of the sympathetic and sensory nervous systems. It stimulates division and differentiation of sympathetic and embryonic sensory neurons as well as basal forebrain cholinergic neurons in the brain. Its relevance in the snake venom is not clear. However, it has been shown to inhibit metalloproteinase-dependent proteolysis of platelet glycoprotein Ib alpha, suggesting a metalloproteinase inhibition to prevent metalloprotease autodigestion and/or protection against prey proteases. Binds a lipid between the two protein chains in the homodimer. The lipid-bound form promotes histamine relase from mouse mast cells, contrary to the lipid-free form. The protein is Venom nerve growth factor 5 of Tropidechis carinatus (Australian rough-scaled snake).